A 551-amino-acid polypeptide reads, in one-letter code: MSEKSREEEKLSFKEQILRDLEKVKGYDEVLKEDEAVVRTPANEPSAEELMADSLSTVEEIMRKAPTVPTHPSQGVPASPADEIQRETPGVPSHPSQDVPSSPAEESGSRPGPGPVRPKKLEREYNETPTRVAVSYTTAEKKAEQAGPETPTPATETVDIIRDTSRRSRREGAKPAKPKKEKKSHVKAFVISFLVFLALLSAGGYFGYQYVLDSLLPIDANSKKYVTVGIPEGSNVQEIGTTLEKAGLVKHGLIFSFYAKYKNYTDLKAGYYNLQKSMSTEDLLKELQKGGTDEPQEPVLATLTIPEGYTLDQIAQTVGQLQGDFKESLTAEAFLAKVQDETFISQAVAKYPTLLESLPVKDSGARYRLEGYLFPATYSIKESTTIESLIDEMLAAMDKNLSPYYSTIKSKNLTVNELLTIASLVEKEGAKTEDRKLIAGVFYNRLNRDMPLQSNIAILYAQGKLGQNISLAEDVAIDTNIDSPYNVYKNVGLMPGPVDSPSLDAIESSINQTKSDNLYFVADVTEGKVYYANNQEDHDRNVAEHVNSKLN.

The Cytoplasmic segment spans residues 1 to 187; it reads MSEKSREEEK…PKKEKKSHVK (187 aa). The tract at residues 38–180 is disordered; sequence VRTPANEPSA…EGAKPAKPKK (143 aa). 2 stretches are compositionally biased toward low complexity: residues 100 to 110 and 145 to 157; these read PSSPAEESGSR and QAGP…ATET. Positions 159 to 174 are enriched in basic and acidic residues; it reads DIIRDTSRRSRREGAK. Residues 188 to 208 traverse the membrane as a helical segment; the sequence is AFVISFLVFLALLSAGGYFGY. Over 209-551 the chain is Extracellular; it reads QYVLDSLLPI…VAEHVNSKLN (343 aa).

The protein belongs to the transglycosylase MltG family.

Its subcellular location is the cell membrane. It carries out the reaction a peptidoglycan chain = a peptidoglycan chain with N-acetyl-1,6-anhydromuramyl-[peptide] at the reducing end + a peptidoglycan chain with N-acetylglucosamine at the non-reducing end.. Functionally, functions as a peptidoglycan terminase that cleaves nascent peptidoglycan strands endolytically to terminate their elongation. Involved in peripheral peptidoglycan (PG) synthesis. This chain is Endolytic murein transglycosylase, found in Streptococcus pneumoniae serotype 2 (strain D39 / NCTC 7466).